The primary structure comprises 235 residues: RAD9, HUS1, RAD1-interacting nuclear orphan protein 1 (235 aa).

S50 is subject to Phosphoserine. Positions 54–60 (SWVLPQF) match the RAD1-binding motif motif. A disordered region spans residues 66 to 106 (SRFPTHRKHHRDQARHPTRRSTCKFPRLTFESPESSSSETL). Residues 69-87 (PTHRKHHRDQARHPTRRST) show a composition bias toward basic residues. Over residues 96-106 (ESPESSSSETL) the composition is skewed to low complexity. The D-box signature appears at 123–130 (RRPLVPLF). The interval 156 to 198 (QTPGSSVREDPISPDQKENSLPSCILGPRTPRTPEPGPVLVKD) is disordered. The span at 162 to 173 (VREDPISPDQKE) shows a compositional bias: basic and acidic residues. The KEN box signature appears at 171-175 (QKENS).

Interacts (when phosphorylated by PLK1) with POLQ; promoting POLQ recruitment to DNA damage sites. Interacts with RAD1; interaction is direct and promotes association with the 9-1-1 (RAD9-RAD1-HUS1) complex. Interacts with RAD18. Interacts with TOPBP1. Interacts with UBE2N. In terms of processing, phosphorylated at Ser-50 by PLK1, promoting interaction with polymerase theta (POLQ). Ubiquitinated and degraded by the APC/C complex upon mitotic exit.

The protein localises to the nucleus. It localises to the chromosome. In terms of biological role, involved in microhomology-mediated end-joining (MMEJ) DNA repair by promoting recruitment of polymerase theta (POLQ) to DNA damage sites during mitosis. MMEJ is an alternative non-homologous end-joining (NHEJ) machinery that takes place during mitosis to repair double-strand breaks in DNA that originate in S-phase. Accumulates in M-phase; following phosphorylation by PLK1, interacts with POLQ, enabling its recruitment to double-strand breaks for subsequent repair. Also involved in the DNA damage response (DDR) signaling in response to genotoxic stresses such as ionizing radiation (IR) during the S phase. Recruited to sites of DNA damage through interaction with the 9-1-1 cell-cycle checkpoint response complex and TOPBP1 in a ATR-dependent manner. Required for the progression of the G1 to S phase transition. Plays a role in the stimulation of CHEK1 phosphorylation. The sequence is that of RAD9, HUS1, RAD1-interacting nuclear orphan protein 1 (Rhno1) from Rattus norvegicus (Rat).